The chain runs to 218 residues: Esterase FPY3 (218 aa).

Catalysis depends on charge relay system residues Ser95, Asp163, and His190.

This sequence belongs to the LovG family.

It functions in the pathway secondary metabolite biosynthesis. Esterase; part of the gene cluster that mediates the biosynthesis of the gamma-pyrones fusapyrone (FPY) and deoxyfusapyrone (dFPY). FPY is an undecaketide and thus likely synthesized by the polyketide synthase FPY1 from acetyl-CoA functioning as starter unit and the addition of 10 malonyl-CoA extender units by successive Claisen-condensations. Next to this, FPY shares some rare features: C-glycosylated 4-deoxyglucose at C-3, a gem-dimethyl group at C-13, and an alpha-beta to beta-gamma double bond shift at C-20. During FPY biosynthesis mono-C-methyl groups are transferred to the tetra-, penta-, hexa- and heptaketide, while two C-methyl groups are transferred to the nonaketide, suggesting that the CMet domain is programmed to selectively catalyze two successive C-alpha-methylation reactions of the nonaketide, while other alpha-carbons are non- or mono-methylated only. While the origin of the 4'-deoxyglucose moiety remains opaque, its transfer to C-3 is most likely mediated by the C-glycosyltransferase FPY2. Next to this, the hydroxyl group present at C-33 and discriminating between FPY and dFPY, is likely to be installed by the cytochrome P450 monooxygenase FPY7. No putative function can be predicted for the remaining genes FPY3-FPY6. The protein is Esterase FPY3 of Fusarium mangiferae (Mango malformation disease fungus).